Reading from the N-terminus, the 290-residue chain is Light-independent protochlorophyllide reductase iron-sulfur ATP-binding protein (290 aa).

ATP is bound by residues 10 to 15 and K39; that span reads GIGKST. Residue S14 participates in Mg(2+) binding. [4Fe-4S] cluster contacts are provided by C95 and C129. An ATP-binding site is contributed by 180–181; sequence NR.

It belongs to the NifH/BchL/ChlL family. In terms of assembly, homodimer. Protochlorophyllide reductase is composed of three subunits; ChlL, ChlN and ChlB. The cofactor is [4Fe-4S] cluster.

The protein resides in the plastid. It is found in the chloroplast. It catalyses the reaction chlorophyllide a + oxidized 2[4Fe-4S]-[ferredoxin] + 2 ADP + 2 phosphate = protochlorophyllide a + reduced 2[4Fe-4S]-[ferredoxin] + 2 ATP + 2 H2O. It functions in the pathway porphyrin-containing compound metabolism; chlorophyll biosynthesis (light-independent). In terms of biological role, component of the dark-operative protochlorophyllide reductase (DPOR) that uses Mg-ATP and reduced ferredoxin to reduce ring D of protochlorophyllide (Pchlide) to form chlorophyllide a (Chlide). This reaction is light-independent. The L component serves as a unique electron donor to the NB-component of the complex, and binds Mg-ATP. The polypeptide is Light-independent protochlorophyllide reductase iron-sulfur ATP-binding protein (Anthoceros angustus (Hornwort)).